A 231-amino-acid chain; its full sequence is uncharacterized protein (231 aa).

Positions 1–17 are cleaved as a signal peptide; the sequence is MFGKILTTSLLIAMTFA. A disordered region spans residues 197–231; the sequence is KARKQQKNEGDDEETEDEQKIGSAIDGWVERQAKL.

This is an uncharacterized protein from Caenorhabditis elegans.